The following is a 248-amino-acid chain: UDP-2,3-diacylglucosamine hydrolase (248 aa).

Positions 8, 10, 41, 79, and 114 each coordinate Mn(2+). Residue 79–80 (NR) coordinates substrate. D122, S160, D171, and H202 together coordinate substrate. The Mn(2+) site is built by H202 and H204.

Belongs to the LpxH family. The cofactor is Mn(2+).

It localises to the cell inner membrane. It carries out the reaction UDP-2-N,3-O-bis[(3R)-3-hydroxytetradecanoyl]-alpha-D-glucosamine + H2O = 2-N,3-O-bis[(3R)-3-hydroxytetradecanoyl]-alpha-D-glucosaminyl 1-phosphate + UMP + 2 H(+). The protein operates within glycolipid biosynthesis; lipid IV(A) biosynthesis; lipid IV(A) from (3R)-3-hydroxytetradecanoyl-[acyl-carrier-protein] and UDP-N-acetyl-alpha-D-glucosamine: step 4/6. Hydrolyzes the pyrophosphate bond of UDP-2,3-diacylglucosamine to yield 2,3-diacylglucosamine 1-phosphate (lipid X) and UMP by catalyzing the attack of water at the alpha-P atom. Involved in the biosynthesis of lipid A, a phosphorylated glycolipid that anchors the lipopolysaccharide to the outer membrane of the cell. This is UDP-2,3-diacylglucosamine hydrolase from Stenotrophomonas maltophilia (strain R551-3).